Consider the following 1171-residue polypeptide: DNA-directed RNA polymerase subunit beta (1171 aa).

This sequence belongs to the RNA polymerase beta chain family. As to quaternary structure, the RNAP catalytic core consists of 2 alpha, 1 beta, 1 beta' and 1 omega subunit. When a sigma factor is associated with the core the holoenzyme is formed, which can initiate transcription.

The enzyme catalyses RNA(n) + a ribonucleoside 5'-triphosphate = RNA(n+1) + diphosphate. Its function is as follows. DNA-dependent RNA polymerase catalyzes the transcription of DNA into RNA using the four ribonucleoside triphosphates as substrates. The sequence is that of DNA-directed RNA polymerase subunit beta from Arthrobacter sp. (strain FB24).